The following is a 444-amino-acid chain: MARTTICALATPPGRGGVAVIRVSGPAVPAIARALAGRLPEPRRAVLARFCDAGGDTLDEGLMLYFPAPRSFTGEDVLELQGHGGEVVVDRLLRRLHALGAHPARPGEFSERAFLNGRMDLTQAEAIADLIAADSEASAQAALRSLEGAFGDAVRELVARVTRLRVQVEAAIDFSDEEIDFLADEAVAGQIGALIDQLQALRDKAGQGRVLRDGMQVVLAGPPNAGKSSLLNALTEDDSAIVTEVPGTTRDLLREHLHIDGMPLHVIDTAGLRDDPDRIEAEGIRRARAAMAEADRVLLIQDIREPPIDPAALALPGDIPLTRVYNKVDLSDEAPGPRRAGDEVAIAVSALTGVGLPALRDHLKSVMGYGEAGSHFSARRRHLDALARAADHLALARRALVEEMAGEIAAEELRLVQHNLGEITGEFTSEDLLGEIFSSFCIGK.

(6S)-5-formyl-5,6,7,8-tetrahydrofolate is bound by residues R22, E79, and R118. One can recognise a TrmE-type G domain in the interval 214–368 (GMQVVLAGPP…LRDHLKSVMG (155 aa)). N224 contributes to the K(+) binding site. GTP-binding positions include 224 to 229 (NAGKSS), 243 to 249 (TEVPGTT), and 268 to 271 (DTAG). Residue S228 coordinates Mg(2+). K(+)-binding residues include T243, V245, and T248. A Mg(2+)-binding site is contributed by T249. K444 lines the (6S)-5-formyl-5,6,7,8-tetrahydrofolate pocket.

This sequence belongs to the TRAFAC class TrmE-Era-EngA-EngB-Septin-like GTPase superfamily. TrmE GTPase family. As to quaternary structure, homodimer. Heterotetramer of two MnmE and two MnmG subunits. K(+) is required as a cofactor.

It localises to the cytoplasm. Functionally, exhibits a very high intrinsic GTPase hydrolysis rate. Involved in the addition of a carboxymethylaminomethyl (cmnm) group at the wobble position (U34) of certain tRNAs, forming tRNA-cmnm(5)s(2)U34. This Alkalilimnicola ehrlichii (strain ATCC BAA-1101 / DSM 17681 / MLHE-1) protein is tRNA modification GTPase MnmE.